The primary structure comprises 117 residues: Ribosome-binding factor A (117 aa).

Belongs to the RbfA family. As to quaternary structure, monomer. Binds 30S ribosomal subunits, but not 50S ribosomal subunits or 70S ribosomes.

Its subcellular location is the cytoplasm. One of several proteins that assist in the late maturation steps of the functional core of the 30S ribosomal subunit. Associates with free 30S ribosomal subunits (but not with 30S subunits that are part of 70S ribosomes or polysomes). Required for efficient processing of 16S rRNA. May interact with the 5'-terminal helix region of 16S rRNA. The polypeptide is Ribosome-binding factor A (Petrotoga mobilis (strain DSM 10674 / SJ95)).